We begin with the raw amino-acid sequence, 124 residues long: Small ribosomal subunit protein uS12cz/uS12cy (124 aa).

It belongs to the universal ribosomal protein uS12 family. In terms of assembly, part of the 30S ribosomal subunit.

It localises to the plastid. Its subcellular location is the chloroplast. With S4 and S5 plays an important role in translational accuracy. Located at the interface of the 30S and 50S subunits. The chain is Small ribosomal subunit protein uS12cz/uS12cy (rps12-A) from Zea mays (Maize).